Consider the following 243-residue polypeptide: Type III pantothenate kinase (243 aa).

Position 6-13 (6-13) interacts with ATP; it reads DIGNTVAK. Residues Tyr-86 and 93–96 each bind substrate; that span reads GYDR. Asp-95 functions as the Proton acceptor in the catalytic mechanism. Asp-116 is a binding site for K(+). Thr-119 is an ATP binding site. Thr-171 provides a ligand contact to substrate.

It belongs to the type III pantothenate kinase family. Homodimer. The cofactor is NH4(+). It depends on K(+) as a cofactor.

It is found in the cytoplasm. The enzyme catalyses (R)-pantothenate + ATP = (R)-4'-phosphopantothenate + ADP + H(+). It functions in the pathway cofactor biosynthesis; coenzyme A biosynthesis; CoA from (R)-pantothenate: step 1/5. In terms of biological role, catalyzes the phosphorylation of pantothenate (Pan), the first step in CoA biosynthesis. This chain is Type III pantothenate kinase, found in Bacteroides fragilis (strain YCH46).